Reading from the N-terminus, the 127-residue chain is Glycine cleavage system H protein 1 (127 aa).

The Lipoyl-binding domain occupies 20–101 (SVTVGITAYA…MGEGWFFRFI (82 aa)). An N6-lipoyllysine modification is found at K60.

The protein belongs to the GcvH family. The glycine cleavage system is composed of four proteins: P, T, L and H. (R)-lipoate is required as a cofactor.

In terms of biological role, the glycine cleavage system catalyzes the degradation of glycine. The H protein shuttles the methylamine group of glycine from the P protein to the T protein. This Pseudomonas putida (strain ATCC 47054 / DSM 6125 / CFBP 8728 / NCIMB 11950 / KT2440) protein is Glycine cleavage system H protein 1.